Here is a 396-residue protein sequence, read N- to C-terminus: Putative pyridoxal phosphate-dependent acyltransferase (396 aa).

111–112 (GF) lines the pyridoxal 5'-phosphate pocket. His-136 lines the substrate pocket. Pyridoxal 5'-phosphate contacts are provided by residues Ser-186, 211–214 (DDAH), and 241–244 (TLSK). Lys-244 bears the N6-(pyridoxal phosphate)lysine mark. Thr-358 contributes to the substrate binding site.

It belongs to the class-II pyridoxal-phosphate-dependent aminotransferase family. As to quaternary structure, homodimer. Pyridoxal 5'-phosphate is required as a cofactor.

The sequence is that of Putative pyridoxal phosphate-dependent acyltransferase from Bacillus anthracis.